Here is a 486-residue protein sequence, read N- to C-terminus: Aspartyl/glutamyl-tRNA(Asn/Gln) amidotransferase subunit B (486 aa).

Belongs to the GatB/GatE family. GatB subfamily. In terms of assembly, heterotrimer of A, B and C subunits.

The catalysed reaction is L-glutamyl-tRNA(Gln) + L-glutamine + ATP + H2O = L-glutaminyl-tRNA(Gln) + L-glutamate + ADP + phosphate + H(+). It carries out the reaction L-aspartyl-tRNA(Asn) + L-glutamine + ATP + H2O = L-asparaginyl-tRNA(Asn) + L-glutamate + ADP + phosphate + 2 H(+). Allows the formation of correctly charged Asn-tRNA(Asn) or Gln-tRNA(Gln) through the transamidation of misacylated Asp-tRNA(Asn) or Glu-tRNA(Gln) in organisms which lack either or both of asparaginyl-tRNA or glutaminyl-tRNA synthetases. The reaction takes place in the presence of glutamine and ATP through an activated phospho-Asp-tRNA(Asn) or phospho-Glu-tRNA(Gln). The polypeptide is Aspartyl/glutamyl-tRNA(Asn/Gln) amidotransferase subunit B (Herminiimonas arsenicoxydans).